Consider the following 262-residue polypeptide: Small ribosomal subunit protein uS3 (262 aa).

Positions V39–R107 constitute a KH type-2 domain. The segment at N211–E262 is disordered. Positions E221–G239 are enriched in basic and acidic residues.

This sequence belongs to the universal ribosomal protein uS3 family. As to quaternary structure, part of the 30S ribosomal subunit. Forms a tight complex with proteins S10 and S14.

Functionally, binds the lower part of the 30S subunit head. Binds mRNA in the 70S ribosome, positioning it for translation. The polypeptide is Small ribosomal subunit protein uS3 (Ralstonia pickettii (strain 12J)).